The chain runs to 1237 residues: Rho guanine nucleotide exchange factor 10-like protein (1237 aa).

2 disordered regions span residues 1–117 (MASS…SSRR) and 132–203 (YDDV…QPKM). The segment covering 25–45 (EAEDDPGEGFEFDDSDDDEDT) has biased composition (acidic residues). Ser-39 bears the Phosphoserine mark. Phosphotyrosine occurs at positions 132 and 153. 2 stretches are compositionally biased toward basic and acidic residues: residues 146 to 163 (EAERNQPYEDARQDRAPQ) and 184 to 194 (EEAKPEAEPTK). The residue at position 241 (Ser-241) is a Phosphoserine. A DH domain is found at 276-463 (VRRHILGSIV…ETLAEKLNEQ (188 aa)). Disordered stretches follow at residues 1091–1118 (QEEAEGQQAEEDKPDGPAPEPAPVPASH) and 1142–1164 (PGPLLSVREPEPADGSALEHSEE).

Interacts with RHOA, RHOB and RHOC.

Its subcellular location is the cytoplasm. Its function is as follows. Acts as a guanine nucleotide exchange factor (GEF) for RHOA, RHOB and RHOC. The chain is Rho guanine nucleotide exchange factor 10-like protein (ARHGEF10L) from Bos taurus (Bovine).